Reading from the N-terminus, the 263-residue chain is uncharacterized protein (263 aa).

Positions 72–168 form a coiled coil; that stretch reads LDKKETKELS…RTIVEIRNTK (97 aa). The tract at residues 76–158 is disordered; that stretch reads ETKELSKKEK…EKKEKKEKED (83 aa). Residues 83–95 show a composition bias toward basic residues; it reads KEKKQLKKEKKAL. Residues 96 to 107 show a composition bias toward basic and acidic residues; the sequence is KKENKGGKDKKD. Over residues 108–121 the composition is skewed to basic residues; the sequence is KKDKKDKKDKKDKK. Basic and acidic residues-rich tracts occupy residues 122-131 and 139-158; these read DKKDKGDKKD and KHDD…EKED.

This is an uncharacterized protein from Dictyostelium discoideum (Social amoeba).